We begin with the raw amino-acid sequence, 280 residues long: Band 7 protein AGAP004871 (280 aa).

The chain crosses the membrane as a helical span at residues 23 to 43; that stretch reads ILIFLSWVLVVLTMPFSLLVC.

This sequence belongs to the band 7/mec-2 family.

It is found in the membrane. In Anopheles gambiae (African malaria mosquito), this protein is Band 7 protein AGAP004871.